The primary structure comprises 329 residues: Glycerol-3-phosphate dehydrogenase [NAD(P)+] (329 aa).

NADPH-binding residues include W11, R30, and K103. Residues K103, G132, and S134 each contribute to the sn-glycerol 3-phosphate site. A136 is a binding site for NADPH. Positions 187, 240, 250, 251, and 252 each coordinate sn-glycerol 3-phosphate. The active-site Proton acceptor is K187. R251 lines the NADPH pocket. NADPH-binding residues include V275 and E277.

The protein belongs to the NAD-dependent glycerol-3-phosphate dehydrogenase family.

Its subcellular location is the cytoplasm. The catalysed reaction is sn-glycerol 3-phosphate + NAD(+) = dihydroxyacetone phosphate + NADH + H(+). It catalyses the reaction sn-glycerol 3-phosphate + NADP(+) = dihydroxyacetone phosphate + NADPH + H(+). It functions in the pathway membrane lipid metabolism; glycerophospholipid metabolism. Catalyzes the reduction of the glycolytic intermediate dihydroxyacetone phosphate (DHAP) to sn-glycerol 3-phosphate (G3P), the key precursor for phospholipid synthesis. This chain is Glycerol-3-phosphate dehydrogenase [NAD(P)+], found in Nitrosomonas eutropha (strain DSM 101675 / C91 / Nm57).